The chain runs to 70 residues: Large ribosomal subunit protein uL29 (70 aa).

The protein belongs to the universal ribosomal protein uL29 family.

This Symbiobacterium thermophilum (strain DSM 24528 / JCM 14929 / IAM 14863 / T) protein is Large ribosomal subunit protein uL29.